We begin with the raw amino-acid sequence, 552 residues long: FERRY endosomal RAB5 effector complex subunit 3 (552 aa).

The segment at 383 to 403 is disordered; that stretch reads LKESLDSGNQNGGNDDKTKNA.

Component of the FERRY complex composed of five subunits, TBCK, PPP1R21, FERRY3, CRYZL1 and GATD1 with a ratio of 1:2:1:2:4, respectively.

The protein localises to the cytoplasm. It is found in the early endosome. Component of the FERRY complex (Five-subunit Endosomal Rab5 and RNA/ribosome intermediary). The FERRY complex directly interacts with mRNAs and RAB5A, and functions as a RAB5A effector involved in the localization and the distribution of specific mRNAs most likely by mediating their endosomal transport. The complex recruits mRNAs and ribosomes to early endosomes through direct mRNA-interaction. Plays a role in mast cell degranulation. This chain is FERRY endosomal RAB5 effector complex subunit 3, found in Pongo abelii (Sumatran orangutan).